The following is a 76-amino-acid chain: Omega-conotoxin-like TxO2 (76 aa).

The signal sequence occupies residues Met1–Ala22. Residues Ala23–Arg52 constitute a propeptide that is removed on maturation. Intrachain disulfides connect Cys53–Cys67, Cys60–Cys71, and Cys66–Cys75.

Belongs to the conotoxin O1 superfamily. In terms of tissue distribution, expressed by the venom duct.

The protein localises to the secreted. Its function is as follows. Omega-conotoxins act at presynaptic membranes, they bind and block voltage-gated calcium channels (Cav). The polypeptide is Omega-conotoxin-like TxO2 (Conus textile (Cloth-of-gold cone)).